A 919-amino-acid chain; its full sequence is UPF0182 protein Tery_4385 (919 aa).

Helical transmembrane passes span 6–26 (YIIIAISVILLVVFSLSRTLV), 52–72 (IFLWVGAFVIYFLFLWSNYWI), 96–116 (IFVKIIFLVNITLISLSAATA), 160–180 (WLFTLVFAGLIISIIVYALKG), 198–218 (THISLLLAGVTILIAVGFWFE), 243–263 (FAYWAMAIVALLLAVVCVLSV), and 268–288 (IIWPTYGIVIYIVLLGLFNVL).

The protein belongs to the UPF0182 family.

It is found in the cell membrane. This Trichodesmium erythraeum (strain IMS101) protein is UPF0182 protein Tery_4385.